The sequence spans 241 residues: L-aspartate dehydrogenase (241 aa).

2 residues coordinate NAD(+): alanine 109 and asparagine 164. The active site involves histidine 193.

This sequence belongs to the L-aspartate dehydrogenase family.

It catalyses the reaction L-aspartate + NADP(+) + H2O = oxaloacetate + NH4(+) + NADPH + H(+). The enzyme catalyses L-aspartate + NAD(+) + H2O = oxaloacetate + NH4(+) + NADH + H(+). It functions in the pathway cofactor biosynthesis; NAD(+) biosynthesis; iminoaspartate from L-aspartate (dehydrogenase route): step 1/1. Its function is as follows. Specifically catalyzes the NAD or NADP-dependent dehydrogenation of L-aspartate to iminoaspartate. The sequence is that of L-aspartate dehydrogenase from Thermotoga sp. (strain RQ2).